The following is a 38-amino-acid chain: Photosystem II reaction center protein L (38 aa).

Residues 17–37 (SLFIGLLLVLVLALLFSSYFF) traverse the membrane as a helical segment.

The protein belongs to the PsbL family. PSII is composed of 1 copy each of membrane proteins PsbA, PsbB, PsbC, PsbD, PsbE, PsbF, PsbH, PsbI, PsbJ, PsbK, PsbL, PsbM, PsbT, PsbX, PsbY, PsbZ, Psb30/Ycf12, peripheral proteins PsbO, CyanoQ (PsbQ), PsbU, PsbV and a large number of cofactors. It forms dimeric complexes.

It is found in the cellular thylakoid membrane. One of the components of the core complex of photosystem II (PSII). PSII is a light-driven water:plastoquinone oxidoreductase that uses light energy to abstract electrons from H(2)O, generating O(2) and a proton gradient subsequently used for ATP formation. It consists of a core antenna complex that captures photons, and an electron transfer chain that converts photonic excitation into a charge separation. This subunit is found at the monomer-monomer interface and is required for correct PSII assembly and/or dimerization. In Acaryochloris marina (strain MBIC 11017), this protein is Photosystem II reaction center protein L.